We begin with the raw amino-acid sequence, 443 residues long: UPF0597 protein Dvul_2496 (443 aa).

Residues 156–178 form a disordered region; that stretch reads GMERAPEADGTLHGGASCEPSAS.

Belongs to the UPF0597 family.

This chain is UPF0597 protein Dvul_2496, found in Nitratidesulfovibrio vulgaris (strain DP4) (Desulfovibrio vulgaris).